Reading from the N-terminus, the 133-residue chain is Small ribosomal subunit protein uS8 (133 aa).

This sequence belongs to the universal ribosomal protein uS8 family. As to quaternary structure, part of the 30S ribosomal subunit. Contacts proteins S5 and S12.

In terms of biological role, one of the primary rRNA binding proteins, it binds directly to 16S rRNA central domain where it helps coordinate assembly of the platform of the 30S subunit. The polypeptide is Small ribosomal subunit protein uS8 (Prochlorococcus marinus (strain MIT 9303)).